A 908-amino-acid chain; its full sequence is Glutamate receptor ionotropic, kainate 2 (908 aa).

Positions 1–31 (MKIIFPILSNPVFRRTVKLLLCLLWIGYSQG) are cleaved as a signal peptide. At 32-561 (TTHVLRFGGI…VFSFLNPLSP (530 aa)) the chain is on the extracellular side. N67, N73, N275, N378, N412, N423, and N430 each carry an N-linked (GlcNAc...) asparagine glycan. C96 and C347 form a disulfide bridge. L-glutamate contacts are provided by P516, A518, and R523. A glycan (N-linked (GlcNAc...) asparagine) is linked at N546. A helical transmembrane segment spans residues 562–582 (DIWMYVLLACLGVSCVLFVIA). Topologically, residues 583 to 638 (RFSPYEWYNPHPCNPDSDVVENNFTLLNSFWFGVGALMRQGSELMPKALSTRIVGG) are cytoplasmic. The helical transmembrane segment at 639 to 659 (IWWFFTLIIISSYTANLAAFL) threads the bilayer. The Extracellular segment spans residues 660 to 819 (TVERMESPID…KEASALGVQN (160 aa)). L-glutamate contacts are provided by A689, T690, and E738. Residues C750 and C804 are joined by a disulfide bond. N-linked (GlcNAc...) asparagine glycosylation occurs at N751. The chain crosses the membrane as a helical span at residues 820–840 (IGGIFIVLAAGLVLSVFVAVG). Residues 841–908 (EFLYKSKKNA…RRLPGKETMA (68 aa)) lie on the Cytoplasmic side of the membrane. S846 and S868 each carry phosphoserine; by PKC. A Glycyl lysine isopeptide (Lys-Gly) (interchain with G-Cter in SUMO1) cross-link involves residue K886.

Belongs to the glutamate-gated ion channel (TC 1.A.10.1) family. GRIK2 subfamily. In terms of assembly, homotetramer and heterotetramer with GRIK5. Tetramers may be formed by the dimerization of dimers. Assembles into a kainate-gated homomeric channel that does not bind AMPA. Can form functional heteromeric receptors with GRIK3, GRIK4 and GRIK5. Interacts with NETO2. Interacts with DLG4. Interacts with NETO2. Interacts (via C-terminus) with KLHL17 (via kelch repeats); the interaction targets GRIK2 for degradation via ubiquitin-proteasome pathway. In terms of processing, sumoylation mediates kainate receptor-mediated endocytosis and regulates synaptic transmission. Sumoylation is enhanced by PIAS3 and desumoylated by SENP1. Ubiquitinated. Ubiquitination regulates the GRIK2 levels at the synapse by leading kainate receptor degradation through proteasome. Post-translationally, phosphorylated by PKC at Ser-868 upon agonist activation, this directly enhance sumoylation.

It is found in the cell membrane. Its subcellular location is the postsynaptic cell membrane. The catalysed reaction is Ca(2+)(in) = Ca(2+)(out). The enzyme catalyses Na(+)(in) = Na(+)(out). With respect to regulation, cold receptor activity activated by temperatures between 10-19 degrees Celsius. In terms of biological role, ionotropic glutamate receptor that functions as a cation-permeable ligand-gated ion channel, gated by L-glutamate and the glutamatergic agonist kainic acid. L-glutamate acts as an excitatory neurotransmitter at many synapses in the central nervous system. Binding of the excitatory neurotransmitter L-glutamate induces a conformation change, leading to the opening of the cation channel, and thereby converts the chemical signal to an electrical impulse. The receptor then desensitizes rapidly and enters a transient inactive state, characterized by the presence of bound agonist. Modulates cell surface expression of NETO2. In association with GRIK3, involved in presynaptic facilitation of glutamate release at hippocampal mossy fiber synapses. Independent of its ionotropic glutamate receptor activity, acts as a thermoreceptor conferring sensitivity to cold temperatures. Functions in dorsal root ganglion neurons. In Macaca fascicularis (Crab-eating macaque), this protein is Glutamate receptor ionotropic, kainate 2 (GRIK2).